Here is a 27-residue protein sequence, read N- to C-terminus: Vasotocin-neurophysin VT (27 aa).

Cys-1 and Cys-6 are oxidised to a cystine. At Gly-9 the chain carries Glycine amide.

The protein belongs to the vasopressin/oxytocin family.

Its function is as follows. Vasotocin is an antidiuretic hormone. In Sclerophrys regularis (Common African toad), this protein is Vasotocin-neurophysin VT.